A 396-amino-acid chain; its full sequence is Elongation factor Tu (396 aa).

The tr-type G domain occupies 10–205 (KPHVNIGTIG…AVDESIPAPV (196 aa)). Residues 19 to 26 (GHVDHGKT) form a G1 region. A GTP-binding site is contributed by 19 to 26 (GHVDHGKT). Thr26 lines the Mg(2+) pocket. Residues 62 to 66 (GITIN) are G2. The segment at 83–86 (DAPG) is G3. GTP contacts are provided by residues 83 to 87 (DAPGH) and 138 to 141 (NKSD). Residues 138-141 (NKSD) form a G4 region. The G5 stretch occupies residues 175–177 (SAL).

The protein belongs to the TRAFAC class translation factor GTPase superfamily. Classic translation factor GTPase family. EF-Tu/EF-1A subfamily. Monomer.

It is found in the cytoplasm. The enzyme catalyses GTP + H2O = GDP + phosphate + H(+). Its function is as follows. GTP hydrolase that promotes the GTP-dependent binding of aminoacyl-tRNA to the A-site of ribosomes during protein biosynthesis. This chain is Elongation factor Tu, found in Mycobacterium leprae (strain Br4923).